The following is a 158-amino-acid chain: Salt stress-responsive protein YocM (158 aa).

The sHSP domain occupies 51–158 (GKGDASFPSM…GQAKTIVIDD (108 aa)).

It belongs to the small heat shock protein (HSP20) family. In terms of assembly, forms homodimers, homotetramers and higher oligomers.

The protein resides in the cytoplasm. Its function is as follows. Part of the cellular protein quality control system with a specific role in salt stress response. May facilitate protein homeostasis, together with chemical chaperones that accumulate during the salt stress response. Increased levels of YocM protects against both heat and salt stress. In vitro, displays an unusual aggregase chaperone activity. In Bacillus subtilis (strain 168), this protein is Salt stress-responsive protein YocM (yocM).